A 93-amino-acid polypeptide reads, in one-letter code: Small integral membrane protein 36 (93 aa).

The chain crosses the membrane as a helical span at residues 14-34 (LIILVASYVILLLVFLISCVL). Residues 73–93 (PKGPGLSLGDPAPLGKKSTMV) are disordered.

The protein localises to the membrane. This is Small integral membrane protein 36 from Homo sapiens (Human).